Consider the following 497-residue polypeptide: Probable malate:quinone oxidoreductase (497 aa).

It belongs to the MQO family. It depends on FAD as a cofactor.

The enzyme catalyses (S)-malate + a quinone = a quinol + oxaloacetate. Its pathway is carbohydrate metabolism; tricarboxylic acid cycle; oxaloacetate from (S)-malate (quinone route): step 1/1. The sequence is that of Probable malate:quinone oxidoreductase from Prochlorococcus marinus subsp. pastoris (strain CCMP1986 / NIES-2087 / MED4).